The primary structure comprises 1153 residues: Protein unc-13 homolog 4B (1153 aa).

Residues 54–84 (VLKSSLAPLEENGSGGEEDSDESPDGTLQLS) are disordered. The 127-residue stretch at 162-288 (ATHEEIYEAA…MKEIAVTASS (127 aa)) folds into the C2 1 domain. Aspartate 195, aspartate 201, aspartate 252, phenylalanine 253, and aspartate 254 together coordinate Ca(2+). In terms of domain architecture, MHD1 spans 637 to 755 (FEVYLILKRY…RCCIFYAQQM (119 aa)). The 107-residue stretch at 869-975 (SNSMDQLMMY…LETSDLIHQY (107 aa)) folds into the MHD2 domain. Positions 990 to 1114 (PYGQLTITAQ…EATPPGEQIM (125 aa)) constitute a C2 2 domain. Positions 1019, 1025, 1083, and 1085 each coordinate Ca(2+).

It belongs to the unc-13 family. As to quaternary structure, interacts with Cam. Ca(2+) is required as a cofactor.

The protein localises to the cytoplasm. Its subcellular location is the cytoskeleton. It is found in the cell projection. It localises to the filopodium. The protein resides in the late endosome. The protein localises to the lysosome. In terms of biological role, essential for tracheal development in embryos. Functions with the GTPase Rab39 and downstream of dnd, to regulate lumen fusion between previously separate tracheal branches (anastomosis). Essential component of secretory lysosome-related organelles (SLs) that are present in the tracheal fusion tip cells (FCs). Mediates intracellular fusion of the extending tracheal stalk cell lumen in the FCs by recruiting the SNARE complex component Syx1A to the SLs, this may then enable the SLs to interact with complementary SNAREs (such as Syb) present in the apical membrane of the FC-FC interface and the membranes of the separate tracheal stalk cells. May also function in the maturation and exocytosis of the SLs. The sequence is that of Protein unc-13 homolog 4B from Drosophila melanogaster (Fruit fly).